The chain runs to 550 residues: Pectinesterase 2.2 (550 aa).

N-linked (GlcNAc...) asparagine glycosylation occurs at N179. Substrate contacts are provided by T312 and Q342. C331 and C358 are joined by a disulfide. The active-site Proton donor is the D365. D386 (nucleophile) is an active-site residue. A disulfide bond links C399 and C433. R454 and W456 together coordinate substrate.

In the N-terminal section; belongs to the PMEI family. It in the C-terminal section; belongs to the pectinesterase family.

It is found in the secreted. It localises to the cell wall. It carries out the reaction [(1-&gt;4)-alpha-D-galacturonosyl methyl ester](n) + n H2O = [(1-&gt;4)-alpha-D-galacturonosyl](n) + n methanol + n H(+). It functions in the pathway glycan metabolism; pectin degradation; 2-dehydro-3-deoxy-D-gluconate from pectin: step 1/5. Functionally, pectinesterase may play a role in cell wall metabolism during fruit growth and development prior to ripening and may be required for preparing cell walls for softening by polygalacturonase during fruit ripening. The sequence is that of Pectinesterase 2.2 (PME2.2) from Solanum lycopersicum (Tomato).